Here is a 425-residue protein sequence, read N- to C-terminus: 2-methylserine hydroxymethyltransferase (425 aa).

(6S)-5,6,7,8-tetrahydrofolate is bound by residues leucine 126 and 130–132; that span reads GHL. An N6-(pyridoxal phosphate)lysine modification is found at lysine 235. A (6S)-5,6,7,8-tetrahydrofolate-binding site is contributed by glutamate 251.

The protein belongs to the SHMT family. Homodimer. Pyridoxal 5'-phosphate is required as a cofactor.

It is found in the cytoplasm. It carries out the reaction (6R)-5,10-methylene-5,6,7,8-tetrahydrofolate + D-alanine + H2O = 2-methylserine + (6S)-5,6,7,8-tetrahydrofolate. It functions in the pathway one-carbon metabolism; tetrahydrofolate interconversion. Catalyzes the reversible interconversion of alpha-methyl-L-serine to D-alanine with tetrahydrofolate (THF) serving as the one-carbon carrier. Cannot use alpha-methyl-D-serine, L-serine, D-serine or L-alanine. The polypeptide is 2-methylserine hydroxymethyltransferase (Ensifer sp).